Reading from the N-terminus, the 445-residue chain is C-type lectin domain family 4 member M (445 aa).

The Cytoplasmic portion of the chain corresponds to 1–49 (MSDSKEPRVQQLGLLEEDPTTSGIRLFPRDFQFQQIHGHKSSTGCLGHG). The Endocytosis signal motif lies at 14–15 (LL). The helical; Signal-anchor for type II membrane protein transmembrane segment at 50–70 (PLVLQLLSFTLLAGVLVAILV) threads the bilayer. At 71–445 (QVSKVPSSLS…KKPAVCFRDE (375 aa)) the chain is on the extracellular side. N-linked (GlcNAc...) asparagine glycosylation occurs at N92. 9 tandem repeats follow at residues 108–130 (KLQEIYQELTQLKAAVGELPEKS), 131–151 (KLQEIYQELTQLKAAVGELPE), 154–176 (KLQEIYQELTQLKAAVGELPEKS), 177–199 (KLQEIYQELTQLKAAVGELPEKS), 200–222 (KLQEIYQELTQLKAAVGELPEKS), 223–245 (KLQETYQELTQLKAAVGELPEKS), 246–268 (KLQEIYQELTQLKAAVGELPEKS), 269–291 (ELQEIYQELTQLKAALGKLPDQS), and 292–314 (KQQQIYQELTDLKTAFERLCRHC). The tract at residues 108 to 315 (KLQEIYQELT…AFERLCRHCP (208 aa)) is 9 X approximate tandem repeats. Disulfide bonds link C311–C441, C314–C325, C342–C435, and C414–C427. The C-type lectin domain occupies 320-436 (FFQGNCYFMS…CDIDNYWICK (117 aa)). Residues E405, N407, S409, E412, N423, and D424 each contribute to the Ca(2+) site. A glycan (N-linked (GlcNAc...) asparagine) is linked at N407.

In terms of assembly, homotetramer.

It is found in the membrane. Its function is as follows. Probable pathogen-recognition receptor involved in peripheral immune surveillance in liver. May mediate the endocytosis of pathogens which are subsequently degraded in lysosomal compartments. Probably recognizes in a calcium-dependent manner high mannose N-linked oligosaccharides in a variety of pathogen antigens. Is a receptor for ICAM3, probably by binding to mannose-like carbohydrates. This is C-type lectin domain family 4 member M (CLEC4M) from Pan troglodytes (Chimpanzee).